Here is a 156-residue protein sequence, read N- to C-terminus: Small ribosomal subunit protein uS7 (156 aa).

It belongs to the universal ribosomal protein uS7 family. In terms of assembly, part of the 30S ribosomal subunit. Contacts proteins S9 and S11.

One of the primary rRNA binding proteins, it binds directly to 16S rRNA where it nucleates assembly of the head domain of the 30S subunit. Is located at the subunit interface close to the decoding center, probably blocks exit of the E-site tRNA. In Synechocystis sp. (strain ATCC 27184 / PCC 6803 / Kazusa), this protein is Small ribosomal subunit protein uS7.